A 312-amino-acid chain; its full sequence is Light-independent protochlorophyllide reductase iron-sulfur ATP-binding protein (312 aa).

Residues 55–60 (GIGKST) and K84 each bind ATP. S59 lines the Mg(2+) pocket. [4Fe-4S] cluster-binding residues include C140 and C174. Residues 225-226 (NR) and 249-251 (PDL) contribute to the ATP site.

This sequence belongs to the NifH/BchL/ChlL family. As to quaternary structure, homodimer. Protochlorophyllide reductase is composed of three subunits; BchL, BchN and BchB. Requires [4Fe-4S] cluster as cofactor.

The catalysed reaction is chlorophyllide a + oxidized 2[4Fe-4S]-[ferredoxin] + 2 ADP + 2 phosphate = protochlorophyllide a + reduced 2[4Fe-4S]-[ferredoxin] + 2 ATP + 2 H2O. Its pathway is porphyrin-containing compound metabolism; bacteriochlorophyll biosynthesis (light-independent). In terms of biological role, component of the dark-operative protochlorophyllide reductase (DPOR) that uses Mg-ATP and reduced ferredoxin to reduce ring D of protochlorophyllide (Pchlide) to form chlorophyllide a (Chlide). This reaction is light-independent. The L component serves as a unique electron donor to the NB-component of the complex, and binds Mg-ATP. The protein is Light-independent protochlorophyllide reductase iron-sulfur ATP-binding protein of Rhodopseudomonas palustris (strain BisB18).